The sequence spans 299 residues: Anti-sigma-D factor RsdA (299 aa).

A helical membrane pass occupies residues 86 to 106 (LAAVGSVAAALLVLSGFGAVV). The disordered stretch occupies residues 187–299 (NTKVETRDPN…APETPVSPTH (113 aa)). Low complexity-rich tracts occupy residues 201-212 (PGSPSNPAAPGS) and 250-271 (PNST…EPGS).

As to quaternary structure, interacts with ECF RNA polymerase sigma factor SigD; this should inhibit the interaction of SigD with the RNA polymerase catalytic core. The cytosolic fragment is degraded by a ClpP1-ClpP2-ClpX complex, as would be expected after S1P and S2P intramembrane proteolysis. This releases SigD so that it may bind to the RNA polymerase catalytic core.

The protein resides in the cell membrane. An anti-sigma factor for extracytoplasmic function (ECF) sigma factor SigD. ECF sigma factors are held in an inactive form by an anti-sigma factor until released by regulated intramembrane proteolysis (RIP). RIP occurs when an extracytoplasmic signal triggers a concerted proteolytic cascade to transmit information and elicit cellular responses. The membrane-spanning regulatory substrate protein is first cut extracytoplasmically (site-1 protease, S1P), then within the membrane itself (site-2 protease, S2P), while cytoplasmic proteases finish degrading the regulatory protein, liberating the sigma factor. Neither S1P nor S2P proteases have been so far identified for this anti-sigma factor. This chain is Anti-sigma-D factor RsdA (rsda), found in Mycobacterium bovis (strain ATCC BAA-935 / AF2122/97).